The following is a 215-amino-acid chain: Variable small protein 2 (215 aa).

A signal peptide spans 1–18; it reads MRKRISAIIMTLFMVFMS. C19 is lipidated: N-palmitoyl cysteine. C19 carries S-diacylglycerol cysteine lipidation.

This sequence belongs to the variable small protein (Vsp) family.

The protein localises to the cell outer membrane. The Vlp and Vsp proteins are antigenically distinct proteins, only one vlp or vsp gene is transcriptionally active at any one time. Switching between these genes is a mechanism of host immune response evasion. This is Variable small protein 2 from Borrelia hermsii.